Consider the following 177-residue polypeptide: ATP synthase subunit delta (177 aa).

Belongs to the ATPase delta chain family. F-type ATPases have 2 components, F(1) - the catalytic core - and F(0) - the membrane proton channel. F(1) has five subunits: alpha(3), beta(3), gamma(1), delta(1), epsilon(1). F(0) has three main subunits: a(1), b(2) and c(10-14). The alpha and beta chains form an alternating ring which encloses part of the gamma chain. F(1) is attached to F(0) by a central stalk formed by the gamma and epsilon chains, while a peripheral stalk is formed by the delta and b chains.

Its subcellular location is the cell inner membrane. Functionally, f(1)F(0) ATP synthase produces ATP from ADP in the presence of a proton or sodium gradient. F-type ATPases consist of two structural domains, F(1) containing the extramembraneous catalytic core and F(0) containing the membrane proton channel, linked together by a central stalk and a peripheral stalk. During catalysis, ATP synthesis in the catalytic domain of F(1) is coupled via a rotary mechanism of the central stalk subunits to proton translocation. In terms of biological role, this protein is part of the stalk that links CF(0) to CF(1). It either transmits conformational changes from CF(0) to CF(1) or is implicated in proton conduction. The sequence is that of ATP synthase subunit delta from Shewanella frigidimarina (strain NCIMB 400).